A 643-amino-acid chain; its full sequence is Phosphomethylpyrimidine synthase (643 aa).

Residues Asn248, Met277, Tyr306, His342, 362–364 (SRG), 403–406 (DGLR), and Glu442 contribute to the substrate site. His446 contributes to the Zn(2+) binding site. Tyr469 lines the substrate pocket. His510 is a binding site for Zn(2+). Residues Cys590, Cys593, and Cys598 each coordinate [4Fe-4S] cluster.

The protein belongs to the ThiC family. Homodimer. [4Fe-4S] cluster serves as cofactor.

It catalyses the reaction 5-amino-1-(5-phospho-beta-D-ribosyl)imidazole + S-adenosyl-L-methionine = 4-amino-2-methyl-5-(phosphooxymethyl)pyrimidine + CO + 5'-deoxyadenosine + formate + L-methionine + 3 H(+). It participates in cofactor biosynthesis; thiamine diphosphate biosynthesis. Functionally, catalyzes the synthesis of the hydroxymethylpyrimidine phosphate (HMP-P) moiety of thiamine from aminoimidazole ribotide (AIR) in a radical S-adenosyl-L-methionine (SAM)-dependent reaction. In Burkholderia lata (strain ATCC 17760 / DSM 23089 / LMG 22485 / NCIMB 9086 / R18194 / 383), this protein is Phosphomethylpyrimidine synthase.